The primary structure comprises 904 residues: Nitrate reductase [NADH] 1 (904 aa).

2 stretches are compositionally biased toward polar residues: residues 1 to 10 and 39 to 50; these read MAASVENRQF and STNFQKKPNSTI. The disordered stretch occupies residues 1–65; sequence MAASVENRQF…SSEDDDDDDE (65 aa). Acidic residues predominate over residues 56-65; that stretch reads SSEDDDDDDE. Cysteine 183 contributes to the Mo-molybdopterin binding site. Residues 531 to 606 form the Cytochrome b5 heme-binding domain; the sequence is SKMYSMSEVR…LEEFRIGELL (76 aa). The heme site is built by histidine 566 and histidine 589. Residues 647–759 form the FAD-binding FR-type domain; the sequence is REKIPCKLID…KGPLGHIEYQ (113 aa). FAD is bound by residues 699–702, 716–720, phenylalanine 721, phenylalanine 728, 733–735, and threonine 786; these read RAYT, VVKIY, and QMS.

This sequence belongs to the nitrate reductase family. Homodimer. FAD serves as cofactor. Requires heme as cofactor. Mo-molybdopterin is required as a cofactor.

It catalyses the reaction nitrite + NAD(+) + H2O = nitrate + NADH + H(+). Its activity is regulated as follows. Regulated by the nitrogen source and controlled by the circadian rhythm. Its function is as follows. Nitrate reductase is a key enzyme involved in the first step of nitrate assimilation in plants, fungi and bacteria. The sequence is that of Nitrate reductase [NADH] 1 (NIA1) from Nicotiana tabacum (Common tobacco).